A 244-amino-acid chain; its full sequence is Flavin-dependent thymidylate synthase (244 aa).

Residues Val2–Lys207 form the ThyX domain. FAD is bound by residues Ser56, Arg80–Arg82, and Gln88. Residues Gln77–Arg80, Gln88–Arg92, and Arg146 contribute to the dUMP site. The ThyX motif motif lies at Arg80–Ser90. FAD is bound by residues Asn162 to Arg164 and His168. DUMP is bound at residue Arg173. The active-site Involved in ionization of N3 of dUMP, leading to its activation is the Arg173.

It belongs to the thymidylate synthase ThyX family. Homotetramer. FAD is required as a cofactor.

The enzyme catalyses dUMP + (6R)-5,10-methylene-5,6,7,8-tetrahydrofolate + NADPH + H(+) = dTMP + (6S)-5,6,7,8-tetrahydrofolate + NADP(+). Its pathway is pyrimidine metabolism; dTTP biosynthesis. Catalyzes the reductive methylation of 2'-deoxyuridine-5'-monophosphate (dUMP) to 2'-deoxythymidine-5'-monophosphate (dTMP) while utilizing 5,10-methylenetetrahydrofolate (mTHF) as the methyl donor, and NADPH and FADH(2) as the reductant. The chain is Flavin-dependent thymidylate synthase from Pyrococcus furiosus (strain ATCC 43587 / DSM 3638 / JCM 8422 / Vc1).